The primary structure comprises 77 residues: U8-lycotoxin-Ls1w (77 aa).

Positions 1-20 are cleaved as a signal peptide; the sequence is MKLIIFTGLVLFAIVSLIEA. Positions 21-26 are excised as a propeptide; it reads QAENEK.

The protein belongs to the neurotoxin 19 (CSTX) family. 08 (U8-Lctx) subfamily. Post-translationally, contains 4 disulfide bonds. In terms of tissue distribution, expressed by the venom gland.

It is found in the secreted. This chain is U8-lycotoxin-Ls1w, found in Lycosa singoriensis (Wolf spider).